Here is a 570-residue protein sequence, read N- to C-terminus: Hydroxylamine reductase (570 aa).

Positions 5, 8, 17, and 23 each coordinate [4Fe-4S] cluster. Positions 266, 290, 334, 425, 453, 478, 513, and 515 each coordinate hybrid [4Fe-2O-2S] cluster. C425 bears the Cysteine persulfide mark.

Belongs to the HCP family. [4Fe-4S] cluster is required as a cofactor. It depends on hybrid [4Fe-2O-2S] cluster as a cofactor.

It localises to the cytoplasm. It catalyses the reaction A + NH4(+) + H2O = hydroxylamine + AH2 + H(+). In terms of biological role, catalyzes the reduction of hydroxylamine to form NH(3) and H(2)O. The protein is Hydroxylamine reductase of Clostridium tetani (strain Massachusetts / E88).